We begin with the raw amino-acid sequence, 895 residues long: Zinc finger protein 574 (895 aa).

C2H2-type zinc fingers lie at residues 16–38 (YVCS…QNSH), 76–98 (YQCL…QELH), and 126–148 (YECV…RQTH). Position 164 is a phosphoserine (S164). Residues 214–236 (YKCSECSQLFQLPADFLEHQATH) form a C2H2-type 4 zinc finger. The tract at residues 239 to 301 (APVPESQEPA…RARRNNSGEA (63 aa)) is disordered. The span at 247–257 (PALQQEVQASS) shows a compositional bias: polar residues. Residues 274–287 (HSYELRNGEAIGRD) are compositionally biased toward basic and acidic residues. S298 bears the Phosphoserine mark. 4 C2H2-type zinc fingers span residues 309 to 331 (LFCS…LRSH), 336 to 358 (FKCP…LGDH), 364 to 386 (FLCV…RRAH), and 392 to 413 (HSCP…RRTH). Positions 434–460 (FPEPAPAETGEPEAPEPPVSEETSAGP) are disordered. C2H2-type zinc fingers lie at residues 466 to 489 (YRCL…RFVH), 495 to 517 (HKCS…LRTH), 523 to 545 (FPCP…RLTH), 551 to 573 (YRCG…RLVH), 579 to 601 (YRCQ…RYHH), and 607 to 630 (YKCR…LVVH). Residues 636–659 (HRCPSCGAAFPSSLRLREHRCAAA) form a C2H2-type 15; degenerate zinc finger. A C2H2-type 16 zinc finger spans residues 667 to 689 (FECGTCGKKVGSAARLQAHEAAH). The disordered stretch occupies residues 687–732 (AAHAAAGPGEVLAKEPPAPRAPRATRAPVASPAALGGTATASPAPA). The segment covering 707-731 (APRATRAPVASPAALGGTATASPAP) has biased composition (low complexity). S717 carries the post-translational modification Phosphoserine. At T724 the chain carries Phosphothreonine. S728 carries the post-translational modification Phosphoserine. 4 consecutive C2H2-type zinc fingers follow at residues 737–759 (LECS…RRIH), 765–787 (YPCP…RRLH), 793–815 (FACE…RRIH), and 821–843 (YSCP…RKTH). R831 is subject to Asymmetric dimethylarginine.

This sequence belongs to the krueppel C2H2-type zinc-finger protein family.

Its subcellular location is the nucleus. May be involved in transcriptional regulation. In Pongo abelii (Sumatran orangutan), this protein is Zinc finger protein 574 (ZNF574).